A 58-amino-acid polypeptide reads, in one-letter code: uncharacterized protein (58 aa).

Residues 5 to 27 form a helical membrane-spanning segment; the sequence is FLHANITIIPHSVLYVSLSYYII.

The protein resides in the membrane. This is an uncharacterized protein from Saccharomyces cerevisiae (strain ATCC 204508 / S288c) (Baker's yeast).